The chain runs to 109 residues: B melanoma antigen 2 (109 aa).

Residues 1 to 17 form the signal peptide; the sequence is MAAGVVFLALSAQLLQA.

Belongs to the BAGE family. In terms of tissue distribution, not expressed in normal tissues except in testis. Expressed in 22% of melanomas, in bladder and lung carcinomas.

The protein localises to the secreted. Functionally, unknown. Candidate gene encoding tumor antigens. This Homo sapiens (Human) protein is B melanoma antigen 2 (BAGE2).